Here is a 467-residue protein sequence, read N- to C-terminus: Iroquois-class homeodomain protein irx-1-A (467 aa).

The homeobox; TALE-type DNA-binding region spans 126–188; the sequence is DPGRPKNATR…NARRRLKKEN (63 aa). Disordered stretches follow at residues 197–306, 318–344, and 410–467; these read KEDD…PPHS, TSPDGALKSSPPPSQGNHTSPPIQHPA, and SLSS…LPSA. Composition is skewed to acidic residues over residues 215–225 and 233–244; these read EDDEEIDLESI and NDGEQSNEEEDE. The segment covering 245–262 has biased composition (basic and acidic residues); sequence KLEHLRQGEKESLKKESE. The segment covering 415–431 has biased composition (basic and acidic residues); that stretch reads KTPERTSPKHSDRENVP. Residues 447 to 460 show a composition bias toward polar residues; it reads RENTLSQQEGTSRI.

Belongs to the TALE/IRO homeobox family. As to expression, expressed early in neural differentiation in the neural plate, and expression continues in the neural tube after neural fold closure. Expressed in the presumptive midbrain territory. Also expressed in the prospective neural crest and the preplacodal field, anterior to the neural plate. Strongly expressed in the profundal placode and weakly expressed in the trigeminal placode. Also expressed in the mesoderm in the Spemann organizer from the start of gastrulation, and subsequently in its derivatives; namely in the notochord as well as in the somites of stage 25 embryos, and the somites and notochord of tailbud embryos. Also expressed in specific and overlapping dynamic patterns with irx2 and irx3 during pronephric kidney development. Renal expression begins in the dorsal region of the pronephric anlage at mid neurula stage and continues to at least tailbud stages where expression is confined to the intermediate tubule segment IT1. Renal expression is maintained at tadpole stages.

It is found in the nucleus. Functionally, acts partially redundantly with other irx members in neural patterning. Required for formation of the posterior forebrain, midbrain, hindbrain, and to a lesser extent, spinal cord. Acts early in neural plate development to induce expression of some but not all proneural genes, and specify a neural precursor state. Also up-regulates repressors that prevent neuronal differentiation. Patterns the neuroectoderm in both the anterior/posterior and dorsal/ventral axes. Acts primarily as a transcriptional repressor during neural development, and binds to the bmp4 promoter to repress gene expression and thus mediate down-regulation of bmp4 by wnt signaling. Controls multiple processes through bmp4-repression including neural plate development, neural crest specification and Spemann organizer development. Involved in the specification of the preplacodal field at the anterior border of the neural plate. Regulates the genetic cascade of interactions that are necessary for positioning the isthmus organizer and the formation of the midbrain-hindbrain boundary. Required during at least two stages of pronephros kidney development; during neurula stages, maintains transcription of key renal genes to define the size and identity of the pronephric anlage, probably in part through regulation of bmp-signaling. Subsequently required for proper formation of the intermediate tubule segment of the pronephros. Acts principally as a transcriptional activator during pronephros development. This Xenopus laevis (African clawed frog) protein is Iroquois-class homeodomain protein irx-1-A (irx1-a).